A 287-amino-acid polypeptide reads, in one-letter code: mRNA-capping enzyme small subunit (287 aa).

Heterodimer of a large and a small subunit.

The protein resides in the virion. It carries out the reaction a 5'-end (5'-triphosphoguanosine)-ribonucleoside in mRNA + S-adenosyl-L-methionine = a 5'-end (N(7)-methyl 5'-triphosphoguanosine)-ribonucleoside in mRNA + S-adenosyl-L-homocysteine. In terms of biological role, catalyzes the last reaction in the mRNA cap formation pathway. The polypeptide is mRNA-capping enzyme small subunit (Sus scrofa (Pig)).